Reading from the N-terminus, the 594-residue chain is Dual specificity protein phosphatase CDC14A (594 aa).

Residues 7–162 (ELIGACEFMK…GLQHGFFDFE (156 aa)) are a. A linker region spans residues 163-176 (TFDVDEYEHYERVE). The segment at 177 to 343 (NGDFNWIVPG…QGDIFRSKLK (167 aa)) is b. Residues 179–336 (DFNWIVPGKF…KQASLWVQGD (158 aa)) form the Tyrosine-protein phosphatase domain. Catalysis depends on Cys278, which acts as the Phosphocysteine intermediate. The disordered stretch occupies residues 396–435 (GDKLRALKSQRQPRTSPSCAFRSDDTKGHPRAVSQPFRLS). The span at 404–413 (SQRQPRTSPS) shows a compositional bias: polar residues. Position 484 is a phosphoserine (Ser484). Residues 487-560 (NLNAATDDPE…PGPHSAKTEE (74 aa)) are disordered. Over residues 500–531 (TSSSSKAGFTASPFTNLLNGSSQPTTRNYPEL) the composition is skewed to polar residues. Residues 532–549 (NNNQYNRSSNSNGGNLNS) show a composition bias toward low complexity. Ser583 bears the Phosphoserine mark.

This sequence belongs to the protein-tyrosine phosphatase family. Non-receptor class CDC14 subfamily. Interacts with KIF20A, which is required to localize CDC14 to the midzone of the mitotic spindle.

The protein localises to the nucleus. Its subcellular location is the cytoplasm. It is found in the cytoskeleton. The protein resides in the microtubule organizing center. It localises to the centrosome. The protein localises to the spindle pole. Its subcellular location is the spindle. It is found in the cell projection. The protein resides in the kinocilium. It localises to the stereocilium. It catalyses the reaction O-phospho-L-tyrosyl-[protein] + H2O = L-tyrosyl-[protein] + phosphate. The enzyme catalyses O-phospho-L-seryl-[protein] + H2O = L-seryl-[protein] + phosphate. It carries out the reaction O-phospho-L-threonyl-[protein] + H2O = L-threonyl-[protein] + phosphate. Dual-specificity phosphatase. Required for centrosome separation and productive cytokinesis during cell division. Dephosphorylates SIRT2 around early anaphase. May dephosphorylate the APC subunit FZR1/CDH1, thereby promoting APC-FZR1 dependent degradation of mitotic cyclins and subsequent exit from mitosis. Required for normal hearing. This is Dual specificity protein phosphatase CDC14A (CDC14A) from Homo sapiens (Human).